The sequence spans 165 residues: LIM domain transcription factor LMO4 (165 aa).

2 consecutive LIM zinc-binding domains span residues 23 to 83 (CAGC…LFGN) and 87 to 147 (CSAC…ALIN).

As to quaternary structure, interacts strongly with LDBS. Interacts with LDB2 and LDB1. Interaction with complexes consisting of at least LDB1 and LHX3 acts to disassemble the complex; may preferentially disassemble LDB1-LHX3 complexes rather than complexes consisting of LDB1, LHX3 and ISL1. Interacts (via the LIM zinc-binding domain 1) with RBBP8. Interacts with both RPPB8 and LDB1 through the same face and cannot bind to both proteins simultaneously. Interacts with BRCA1 (via the BRCT domains); the interaction represses BRCA1 transcriptional activity. Interacts with DEAF1; LMO4 blocks export from nucleus.

Its function is as follows. Transcription cofactor. Plays a role in establishing motor neuron identity, in concert with MNX1, acting, at least in part, to disrupt LDB1-LHX3 complexes thereby negatively modulating interneuron genes in motor neurons. The protein is LIM domain transcription factor LMO4 (LMO4) of Bos taurus (Bovine).